The chain runs to 228 residues: NAD(P)H-hydrate epimerase (228 aa).

In terms of domain architecture, YjeF N-terminal spans 10–214 (AIDIDQELFN…DLERKYDLKI (205 aa)). 58 to 62 (NNGGD) contacts (6S)-NADPHX. Asparagine 59 and aspartate 123 together coordinate K(+). Residues 127–133 (GFSFKPP) and aspartate 156 contribute to the (6S)-NADPHX site. Serine 159 serves as a coordination point for K(+).

Belongs to the NnrE/AIBP family. The cofactor is K(+).

It catalyses the reaction (6R)-NADHX = (6S)-NADHX. It carries out the reaction (6R)-NADPHX = (6S)-NADPHX. Functionally, catalyzes the epimerization of the S- and R-forms of NAD(P)HX, a damaged form of NAD(P)H that is a result of enzymatic or heat-dependent hydration. This is a prerequisite for the S-specific NAD(P)H-hydrate dehydratase to allow the repair of both epimers of NAD(P)HX. The sequence is that of NAD(P)H-hydrate epimerase from Pediculus humanus subsp. corporis (Body louse).